The chain runs to 393 residues: MKLRSIRDAEVRNKRVIVRVDFNVPLDAEGNVVDDFRIRAALPTIEYLVENGAKVILISHLGRPKGKRDKKYSLVGVAKRLAELLHKEILFAPDVVGEEVELAVNGLRSGDILLCENVRFHEEEEKNDAEFAKNIASLGEIFVNDAFSASHRAHATVEGITKFLPSYAGFLMEKEVNYLSMLTENPQRPYYLVLGGAKVSDKVALLQNLLPKVDGMVIGGAMVFTFWKAQGKEIGKSIVEDDLVGFAKELLEQATTQNKEIVLAKDFVVADENKEHVEIKAISDFGPADIGYDIGPESIKEFKNALVKARTVFWNGPLGLFEDAKFAEGTKQVGAFLADFPGTVVVGGGDTANAVREMELFEKFAHVSTGGGASLEFLEGKVLPGIAPLVVEG.

Substrate-binding positions include 21–23, R37, 60–63, R119, and R152; these read DFN and HLGR. Residues K202, G291, E322, and 348 to 351 contribute to the ATP site; that span reads GGDT.

The protein belongs to the phosphoglycerate kinase family. As to quaternary structure, monomer.

It is found in the cytoplasm. The catalysed reaction is (2R)-3-phosphoglycerate + ATP = (2R)-3-phospho-glyceroyl phosphate + ADP. The protein operates within carbohydrate degradation; glycolysis; pyruvate from D-glyceraldehyde 3-phosphate: step 2/5. The chain is Phosphoglycerate kinase from Coprothermobacter proteolyticus (strain ATCC 35245 / DSM 5265 / OCM 4 / BT).